Reading from the N-terminus, the 253-residue chain is Acidic 26 kDa endochitinase (253 aa).

The signal sequence occupies residues 1–24 (MKFNIVSPVALSCLFFLFLTGTLA). The active-site Proton donor is Glu-92. Cys-212 and Cys-244 form a disulfide bridge.

This sequence belongs to the glycosyl hydrolase 19 family. Chitinase class II subfamily.

It localises to the secreted. The protein localises to the extracellular space. It carries out the reaction Random endo-hydrolysis of N-acetyl-beta-D-glucosaminide (1-&gt;4)-beta-linkages in chitin and chitodextrins.. Defense against chitin-containing fungal pathogens. This is Acidic 26 kDa endochitinase (CHI3) from Solanum lycopersicum (Tomato).